The chain runs to 298 residues: Probable alpha-L-glutamate ligase 2 (298 aa).

The 184-residue stretch at Met-104–Glu-287 folds into the ATP-grasp domain. Residues Lys-141, Glu-178–Tyr-179, Asp-187, and Arg-211–Asn-213 contribute to the ATP site. 3 residues coordinate Mg(2+): Asp-248, Glu-260, and Asn-262. Asp-248, Glu-260, and Asn-262 together coordinate Mn(2+).

Belongs to the RimK family. It depends on Mg(2+) as a cofactor. Mn(2+) is required as a cofactor.

This chain is Probable alpha-L-glutamate ligase 2, found in Shewanella frigidimarina (strain NCIMB 400).